The primary structure comprises 325 residues: tRNA(Ile)-lysidine synthase (325 aa).

34-39 (SGGQDS) contributes to the ATP binding site.

Belongs to the tRNA(Ile)-lysidine synthase family.

The protein localises to the cytoplasm. It catalyses the reaction cytidine(34) in tRNA(Ile2) + L-lysine + ATP = lysidine(34) in tRNA(Ile2) + AMP + diphosphate + H(+). Ligates lysine onto the cytidine present at position 34 of the AUA codon-specific tRNA(Ile) that contains the anticodon CAU, in an ATP-dependent manner. Cytidine is converted to lysidine, thus changing the amino acid specificity of the tRNA from methionine to isoleucine. This chain is tRNA(Ile)-lysidine synthase, found in Synechococcus sp. (strain ATCC 27144 / PCC 6301 / SAUG 1402/1) (Anacystis nidulans).